Reading from the N-terminus, the 402-residue chain is D-galactonate dehydratase family member RspA (402 aa).

The substrate site is built by asparagine 37 and histidine 122. Tyrosine 159 acts as the Proton donor/acceptor in catalysis. Aspartate 210 provides a ligand contact to Mg(2+). The Proton donor/acceptor role is filled by histidine 212. The Mg(2+) site is built by glutamate 236 and glutamate 262. Positions 262, 283, 312, 316, and 339 each coordinate substrate.

The protein belongs to the mandelate racemase/muconate lactonizing enzyme family. GalD subfamily. Mg(2+) serves as cofactor.

The catalysed reaction is D-mannonate = 2-dehydro-3-deoxy-D-gluconate + H2O. In terms of biological role, has low D-mannonate dehydratase activity (in vitro), suggesting that this is not a physiological substrate and that it has no significant role in D-mannonate degradation in vivo. Has no detectable activity with a panel of 70 other acid sugars (in vitro). This Cellvibrio japonicus (strain Ueda107) (Pseudomonas fluorescens subsp. cellulosa) protein is D-galactonate dehydratase family member RspA (rspA).